The sequence spans 459 residues: WD repeat-containing protein 41 (459 aa).

WD repeat units follow at residues 40–79 (KAHH…KLLE), 82–128 (GHTQ…QVQR), 131–168 (CFQS…LCKT), 220–258 (DHQD…MQAY), 321–359 (AHDS…QLAA), and 403–441 (GHSS…SGLR).

Component of the C9orf72-SMCR8 complex, at least composed of C9orf72, SMCR8 and WDR41. The complex is formed of two protomers, each individually consisting of one molecule each of C9orf72, SMCR8 and WDR41. The protomers homodimerize via an interaction between C9orf72 (via C-terminus) and SMCR8 (via N-terminus). Within each protomer SMCR8 (via DENN domain) acts as a bridging protein between WDR41 (via C-terminus and N-terminus) and C9orf72 (via C-terminus). The C9orf72-SMCR8 complex associates with the ULK1/ATG1 kinase complex.

It localises to the cytoplasm. In terms of biological role, non-catalytic component of the C9orf72-SMCR8 complex, a complex that has guanine nucleotide exchange factor (GEF) activity and regulates autophagy. The C9orf72-SMCR8 complex promotes the exchange of GDP to GTP, converting inactive GDP-bound RAB8A and RAB39B into their active GTP-bound form, thereby promoting autophagosome maturation. As part of the C9orf72-SMCR8 complex, stimulates RAB8A and RAB11A GTPase activity in vitro, however WDR42 is shown not be an essential complex component for this function. The C9orf72-SMCR8 complex also acts as a negative regulator of autophagy initiation by interacting with the ULK1/ATG1 kinase complex and inhibiting its protein kinase activity. This is WD repeat-containing protein 41 from Homo sapiens (Human).